The sequence spans 862 residues: Ubiquitin carboxyl-terminal hydrolase 13 (862 aa).

A UBP-type; degenerate zinc finger spans residues 182–290 (QASKHAKSLV…KHLAHFGIDM (109 aa)). The Zn(2+) site is built by C206, C209, C226, and H239. The 530-residue stretch at 331–860 (TGMKNLGNSC…LGYIYFYHRI (530 aa)) folds into the USP domain. C340 acts as the Nucleophile in catalysis. UBA domains follow at residues 647–688 (DIDE…IIAH) and 722–762 (QPPE…IFSH). H822 acts as the Proton acceptor in catalysis.

This sequence belongs to the peptidase C19 family.

It carries out the reaction Thiol-dependent hydrolysis of ester, thioester, amide, peptide and isopeptide bonds formed by the C-terminal Gly of ubiquitin (a 76-residue protein attached to proteins as an intracellular targeting signal).. Specifically inhibited by spautin-1 (specific and potent autophagy inhibitor-1), a derivative of MBCQ that binds to USP13 and inhibits deubiquitinase activity. Its function is as follows. Deubiquitinase that mediates deubiquitination of target proteins and is involved in various processes such as autophagy and endoplasmic reticulum-associated degradation (ERAD). The protein is Ubiquitin carboxyl-terminal hydrolase 13 (USP13) of Gallus gallus (Chicken).